Reading from the N-terminus, the 246-residue chain is Pyridoxine 5'-phosphate synthase (246 aa).

A 3-amino-2-oxopropyl phosphate-binding site is contributed by asparagine 12. 14-15 (DH) serves as a coordination point for 1-deoxy-D-xylulose 5-phosphate. Arginine 23 provides a ligand contact to 3-amino-2-oxopropyl phosphate. Catalysis depends on histidine 48, which acts as the Proton acceptor. Positions 50 and 55 each coordinate 1-deoxy-D-xylulose 5-phosphate. The active-site Proton acceptor is the glutamate 75. Threonine 105 lines the 1-deoxy-D-xylulose 5-phosphate pocket. The Proton donor role is filled by histidine 196. 3-amino-2-oxopropyl phosphate-binding positions include glycine 197 and 218 to 219 (GH).

The protein belongs to the PNP synthase family. Homooctamer; tetramer of dimers.

Its subcellular location is the cytoplasm. It carries out the reaction 3-amino-2-oxopropyl phosphate + 1-deoxy-D-xylulose 5-phosphate = pyridoxine 5'-phosphate + phosphate + 2 H2O + H(+). Its pathway is cofactor biosynthesis; pyridoxine 5'-phosphate biosynthesis; pyridoxine 5'-phosphate from D-erythrose 4-phosphate: step 5/5. In terms of biological role, catalyzes the complicated ring closure reaction between the two acyclic compounds 1-deoxy-D-xylulose-5-phosphate (DXP) and 3-amino-2-oxopropyl phosphate (1-amino-acetone-3-phosphate or AAP) to form pyridoxine 5'-phosphate (PNP) and inorganic phosphate. In Pseudomonas syringae pv. syringae (strain B728a), this protein is Pyridoxine 5'-phosphate synthase.